A 918-amino-acid chain; its full sequence is Isoleucine--tRNA ligase (918 aa).

Positions 57–67 (PYANGDIHIGH) match the 'HIGH' region motif. Glutamate 568 provides a ligand contact to L-isoleucyl-5'-AMP. Residues 609-613 (KMSKS) carry the 'KMSKS' region motif. An ATP-binding site is contributed by lysine 612. Cysteine 894, cysteine 897, cysteine 909, and cysteine 912 together coordinate Zn(2+).

It belongs to the class-I aminoacyl-tRNA synthetase family. IleS type 1 subfamily. As to quaternary structure, monomer. Requires Zn(2+) as cofactor.

Its subcellular location is the cytoplasm. It catalyses the reaction tRNA(Ile) + L-isoleucine + ATP = L-isoleucyl-tRNA(Ile) + AMP + diphosphate. Catalyzes the attachment of isoleucine to tRNA(Ile). As IleRS can inadvertently accommodate and process structurally similar amino acids such as valine, to avoid such errors it has two additional distinct tRNA(Ile)-dependent editing activities. One activity is designated as 'pretransfer' editing and involves the hydrolysis of activated Val-AMP. The other activity is designated 'posttransfer' editing and involves deacylation of mischarged Val-tRNA(Ile). The chain is Isoleucine--tRNA ligase from Sulfurovum sp. (strain NBC37-1).